Here is a 554-residue protein sequence, read N- to C-terminus: Apyrase (554 aa).

Positions 1–21 are cleaved as a signal peptide; the sequence is MFKITVFIYVLQLILPSKVHS. The a divalent metal cation site is built by aspartate 43, histidine 45, aspartate 92, asparagine 124, histidine 224, and histidine 248. Residues arginine 358, asparagine 394, arginine 399, phenylalanine 418, phenylalanine 504, and aspartate 510 each coordinate AMP.

This sequence belongs to the 5'-nucleotidase family. A divalent metal cation serves as cofactor. Salivary gland (at protein level).

It is found in the secreted. The catalysed reaction is a ribonucleoside 5'-triphosphate + 2 H2O = a ribonucleoside 5'-phosphate + 2 phosphate + 2 H(+). Its function is as follows. Facilitates hematophagy by inhibiting ADP-dependent platelet aggregation in the host. Cleaves adenosine triphosphate (ATP) and adenosine diphosphate (ADP) to adenosine monophosphate (AMP) and inorganic phosphate. Shows potential for antithrombotic activity. Can induce basophil activation. May reduce probing time by facilitating the speed of locating blood. The protein is Apyrase of Tabanus yao (Horsefly).